The following is a 393-amino-acid chain: Putative competence-damage inducible protein (393 aa).

Belongs to the CinA family.

This Streptococcus suis (strain 05ZYH33) protein is Putative competence-damage inducible protein.